The primary structure comprises 232 residues: Ubiquinone biosynthesis O-methyltransferase (232 aa).

S-adenosyl-L-methionine contacts are provided by Arg-36, Gly-55, Asp-76, and Met-120.

Belongs to the methyltransferase superfamily. UbiG/COQ3 family.

It catalyses the reaction a 3-demethylubiquinol + S-adenosyl-L-methionine = a ubiquinol + S-adenosyl-L-homocysteine + H(+). The catalysed reaction is a 3-(all-trans-polyprenyl)benzene-1,2-diol + S-adenosyl-L-methionine = a 2-methoxy-6-(all-trans-polyprenyl)phenol + S-adenosyl-L-homocysteine + H(+). It participates in cofactor biosynthesis; ubiquinone biosynthesis. Functionally, O-methyltransferase that catalyzes the 2 O-methylation steps in the ubiquinone biosynthetic pathway. This chain is Ubiquinone biosynthesis O-methyltransferase, found in Chromobacterium violaceum (strain ATCC 12472 / DSM 30191 / JCM 1249 / CCUG 213 / NBRC 12614 / NCIMB 9131 / NCTC 9757 / MK).